The sequence spans 123 residues: PTS system glucitol/sorbitol-specific EIIA component (123 aa).

Positions 1–116 (MTVIYQTTIT…PDDIAPGSVL (116 aa)) constitute a PTS EIIA type-5 domain. The active-site Tele-phosphohistidine intermediate is the His43. The residue at position 43 (His43) is a Phosphohistidine; by HPr.

It localises to the cytoplasm. Its function is as follows. The phosphoenolpyruvate-dependent sugar phosphotransferase system (sugar PTS), a major carbohydrate active transport system, catalyzes the phosphorylation of incoming sugar substrates concomitantly with their translocation across the cell membrane. The enzyme II complex composed of SrlA, SrlB and SrlE is involved in glucitol/sorbitol transport. The chain is PTS system glucitol/sorbitol-specific EIIA component (srlB) from Shigella flexneri.